A 535-amino-acid chain; its full sequence is Peptide chain release factor 3 (535 aa).

The 270-residue stretch at 8–277 (KRRRTFAIIS…TLVDLAPPPG (270 aa)) folds into the tr-type G domain. GTP contacts are provided by residues 17-24 (SHPDAGKT), 85-89 (DTPGH), and 139-142 (NKLD).

It belongs to the TRAFAC class translation factor GTPase superfamily. Classic translation factor GTPase family. PrfC subfamily.

It localises to the cytoplasm. Increases the formation of ribosomal termination complexes and stimulates activities of RF-1 and RF-2. It binds guanine nucleotides and has strong preference for UGA stop codons. It may interact directly with the ribosome. The stimulation of RF-1 and RF-2 is significantly reduced by GTP and GDP, but not by GMP. The sequence is that of Peptide chain release factor 3 from Nitrosomonas eutropha (strain DSM 101675 / C91 / Nm57).